Consider the following 206-residue polypeptide: Probable metallo-hydrolase MJ0888 (206 aa).

Residues His-55, His-57, Asp-59, His-60, His-130, Asp-147, and His-190 each contribute to the Zn(2+) site.

It belongs to the metallo-beta-lactamase superfamily. Zn(2+) is required as a cofactor.

In Methanocaldococcus jannaschii (strain ATCC 43067 / DSM 2661 / JAL-1 / JCM 10045 / NBRC 100440) (Methanococcus jannaschii), this protein is Probable metallo-hydrolase MJ0888.